Reading from the N-terminus, the 557-residue chain is Formate--tetrahydrofolate ligase (557 aa).

Position 67–74 (67–74 (TPAGEGKT)) interacts with ATP.

Belongs to the formate--tetrahydrofolate ligase family.

The catalysed reaction is (6S)-5,6,7,8-tetrahydrofolate + formate + ATP = (6R)-10-formyltetrahydrofolate + ADP + phosphate. It functions in the pathway one-carbon metabolism; tetrahydrofolate interconversion. This is Formate--tetrahydrofolate ligase from Cereibacter sphaeroides (strain ATCC 17025 / ATH 2.4.3) (Rhodobacter sphaeroides).